We begin with the raw amino-acid sequence, 420 residues long: Dual-specificity RNA methyltransferase RlmN (420 aa).

Residue E115 is the Proton acceptor of the active site. The Radical SAM core domain maps to 121–388 (DADRGTLCVS…APIRTPRGRD (268 aa)). C128 and C393 form a disulfide bridge. Positions 135, 139, and 142 each coordinate [4Fe-4S] cluster. S-adenosyl-L-methionine contacts are provided by residues 217-218 (GE), S249, 271-273 (SLH), and N350. The active-site S-methylcysteine intermediate is the C393.

Belongs to the radical SAM superfamily. RlmN family. It depends on [4Fe-4S] cluster as a cofactor.

The protein localises to the cytoplasm. It carries out the reaction adenosine(2503) in 23S rRNA + 2 reduced [2Fe-2S]-[ferredoxin] + 2 S-adenosyl-L-methionine = 2-methyladenosine(2503) in 23S rRNA + 5'-deoxyadenosine + L-methionine + 2 oxidized [2Fe-2S]-[ferredoxin] + S-adenosyl-L-homocysteine. The catalysed reaction is adenosine(37) in tRNA + 2 reduced [2Fe-2S]-[ferredoxin] + 2 S-adenosyl-L-methionine = 2-methyladenosine(37) in tRNA + 5'-deoxyadenosine + L-methionine + 2 oxidized [2Fe-2S]-[ferredoxin] + S-adenosyl-L-homocysteine. Specifically methylates position 2 of adenine 2503 in 23S rRNA and position 2 of adenine 37 in tRNAs. m2A2503 modification seems to play a crucial role in the proofreading step occurring at the peptidyl transferase center and thus would serve to optimize ribosomal fidelity. The polypeptide is Dual-specificity RNA methyltransferase RlmN (Sphingopyxis alaskensis (strain DSM 13593 / LMG 18877 / RB2256) (Sphingomonas alaskensis)).